Here is a 165-residue protein sequence, read N- to C-terminus: Ribosome maturation factor RimM (165 aa).

The 72-residue stretch at 94–165 folds into the PRC barrel domain; sequence EDEFYIADLT…YVILNYQREA (72 aa).

This sequence belongs to the RimM family. As to quaternary structure, binds ribosomal protein uS19.

It is found in the cytoplasm. In terms of biological role, an accessory protein needed during the final step in the assembly of 30S ribosomal subunit, possibly for assembly of the head region. Essential for efficient processing of 16S rRNA. May be needed both before and after RbfA during the maturation of 16S rRNA. It has affinity for free ribosomal 30S subunits but not for 70S ribosomes. This Rickettsia rickettsii (strain Sheila Smith) protein is Ribosome maturation factor RimM.